The chain runs to 1164 residues: FH1/FH2 domain-containing protein 1 (1164 aa).

Residues 53-458 (AQIPAVHRLL…AAETEKQVAL (406 aa)) enclose the GBD/FH3 domain. Disordered regions lie at residues 340–411 (DIEE…VGPP) and 470–500 (MPNE…QSPA). The span at 355–368 (KPSSEEGKRSRRSL) shows a compositional bias: basic and acidic residues. A Phosphoserine modification is found at S367. Over residues 402 to 411 (GPASSPVGPP) the composition is skewed to low complexity. A Phosphoserine modification is found at S486. The FH1 domain maps to 487-615 (PETAPAARTP…LAAPLPHSVP (129 aa)). The residue at position 495 (T495) is a Phosphothreonine. Residues S498, S523, and S573 each carry the phosphoserine modification. Positions 566 to 619 (GKDIPAPSPPLPLLSGVPPPPPLPPPPPIKGPFPPPPPLPLAAPLPHSVPDSSA) are disordered. Positions 571 to 608 (APSPPLPLLSGVPPPPPLPPPPPIKGPFPPPPPLPLAA) are enriched in pro residues. Residues 612-807 (HSVPDSSALP…AEPLFDLKVG (196 aa)) form an interaction with ROCK1 region. The FH2 domain occupies 616 to 1013 (DSSALPTKRK…YRERNKTRGR (398 aa)). T690 carries the phosphothreonine modification. The stretch at 884–921 (LTRCAKVDFEQLTENLGQLERRSRAAEESLRSLAKHEL) forms a coiled coil. The disordered stretch occupies residues 1020 to 1143 (KFSGVAGEAP…NRKSLRRTLK (124 aa)). The segment covering 1028 to 1041 (APSNPSVPVAVSSG) has biased composition (low complexity). The 81-residue stretch at 1053–1133 (MKSLLTSRPE…AARERKRSRG (81 aa)) folds into the DAD domain. Over residues 1073–1089 (MVQSSSPIMPTVGPSTA) the composition is skewed to polar residues. The segment covering 1127-1142 (ERKRSRGNRKSLRRTL) has biased composition (basic residues).

It belongs to the formin homology family. Self-associates via the FH2 domain. Binds to F-actin via its N-terminus. Binds to the cytoplasmic domain of CD21 via its C-terminus. Interacts with ROCK1 in a Src-dependent manner. Post-translationally, phosphorylated by ROCK1. In terms of tissue distribution, ubiquitous. Highly expressed in spleen.

It is found in the cytoplasm. The protein localises to the cytoskeleton. The protein resides in the cell projection. It localises to the bleb. Required for the assembly of F-actin structures, such as stress fibers. Depends on the Rho-ROCK cascade for its activity. Contributes to the coordination of microtubules with actin fibers and plays a role in cell elongation. Acts synergistically with ROCK1 to promote SRC-dependent non-apoptotic plasma membrane blebbing. This is FH1/FH2 domain-containing protein 1 (FHOD1) from Homo sapiens (Human).